We begin with the raw amino-acid sequence, 126 residues long: Holo-[acyl-carrier-protein] synthase (126 aa).

2 residues coordinate Mg(2+): Asp-9 and Glu-57.

This sequence belongs to the P-Pant transferase superfamily. AcpS family. Mg(2+) serves as cofactor.

The protein localises to the cytoplasm. It catalyses the reaction apo-[ACP] + CoA = holo-[ACP] + adenosine 3',5'-bisphosphate + H(+). Transfers the 4'-phosphopantetheine moiety from coenzyme A to a Ser of acyl-carrier-protein. The chain is Holo-[acyl-carrier-protein] synthase from Idiomarina loihiensis (strain ATCC BAA-735 / DSM 15497 / L2-TR).